The chain runs to 873 residues: Serine/threonine-protein phosphatase 4 regulatory subunit 4 (873 aa).

HEAT repeat units follow at residues isoleucine 213–valine 251, valine 252–threonine 290, and asparagine 392–leucine 427. Positions glutamine 686–aspartate 720 form a coiled coil. Basic and acidic residues predominate over residues glutamate 713–lysine 737. Residues glutamate 713–lysine 766 form a disordered region. Residues isoleucine 747–serine 762 show a composition bias toward low complexity. Serine 775 is modified (phosphoserine). The residue at position 797 (threonine 797) is a Phosphothreonine. Polar residues predominate over residues threonine 822–aspartate 858. Residues threonine 822 to proline 873 form a disordered region. A compositionally biased stretch (basic residues) spans alanine 864–proline 873.

In terms of assembly, serine/threonine-protein phosphatase 4 (PP4) occurs in different assemblies of the catalytic and one or more regulatory subunits. Component of the PP4 complex PPP4C-PPP4R4.

It localises to the cytoplasm. Functionally, putative regulatory subunit of serine/threonine-protein phosphatase 4. This chain is Serine/threonine-protein phosphatase 4 regulatory subunit 4 (PPP4R4), found in Homo sapiens (Human).